We begin with the raw amino-acid sequence, 464 residues long: Glutamate--tRNA ligase (464 aa).

Positions 10-20 (PSPTGYLHIGG) match the 'HIGH' region motif. Basic and acidic residues predominate over residues 113–130 (QEAKKEKPRYDGRWRPEA). The segment at 113 to 142 (QEAKKEKPRYDGRWRPEAGKALPVPPTDVP) is disordered. The 'KMSKS' region motif lies at 242–246 (KLSKR). ATP is bound at residue Lys-245.

Belongs to the class-I aminoacyl-tRNA synthetase family. Glutamate--tRNA ligase type 1 subfamily. Monomer.

Its subcellular location is the cytoplasm. The enzyme catalyses tRNA(Glu) + L-glutamate + ATP = L-glutamyl-tRNA(Glu) + AMP + diphosphate. In terms of biological role, catalyzes the attachment of glutamate to tRNA(Glu) in a two-step reaction: glutamate is first activated by ATP to form Glu-AMP and then transferred to the acceptor end of tRNA(Glu). The sequence is that of Glutamate--tRNA ligase from Dechloromonas aromatica (strain RCB).